Here is a 1013-residue protein sequence, read N- to C-terminus: MGDKKDDKSSPKKSKAKERRDLDDLKKEVAMTEHKMSVEEVCRKYNTDCVQGLTHSKAQEILARDGPNALTPPPTTPEWVKFCRQLFGGFSILLWIGAILCFLAYGIQAGTEDDPSGDNLYLGIVLAAVVIITGCFSYYQEAKSSKIMESFKNMVPQQALVIREGEKMQVNAEEVVVGDLVEIKGGDRVPADLRIISAHGCKVDNSSLTGESEPQTRSPDCTHDNPLETRNITFFSTNCVEGTARGVVVATGDRTVMGRIATLASGLEVGKTPIAIEIEHFIQLITGVAVFLGVSFFILSLILGYTWLEAVIFLIGIIVANVPEGLLATVTVCLTLTAKRMARKNCLVKNLEAVETLGSTSTICSDKTGTLTQNRMTVAHMWFDNQIHEADTTEDQSGTSFDKSSHTWVALSHIAGLCNRAVFKGGQDNIPVLKRDVAGDASESALLKCIELSSGSVKLMRERNKKVAEIPFNSTNKYQLSIHETEDPNDNRYLLVMKGAPERILDRCATILLQGKEQPLDEEMKEAFQNAYLELGGLGERVLGFCHYYLPEEQFPKGFAFDCDDVNFTTDNLCFVGLMSMIDPPRAAVPDAVGKCRSAGIKVIMVTGDHPITAKAIAKGVGIISEGNETVEDIAARLNIPVSQVNPRDAKACVIHGTDLKDFTSEQIDEILQNHTEIVFARTSPQQKLIIVEGCQRQGAIVAVTGDGVNDSPALKKADIGVAMGIAGSDVSKQAADMILLDDNFASIVTGVEEGRLIFDNLKKSIAYTLTSNIPEITPFLLFIMANIPLPLGTITILCIDLGTDMVPAISLAYEAAESDIMKRQPRNPRTDKLVNERLISMAYGQIGMIQALGGFFSYFVILAENGFLPGNLVGIRLNWDDRTVNDLEDSYGQQWTYEQRKVVEFTCHTAFFVSIVVVQWADLIICKTRRNSVFQQGMKNKILIFGLFEETALAAFLSYCPGMDVALRMYPLKPSWWFCAFPYSFLIFVYDEIRKLILRRNPGGWVEKETYY.

The segment covering 1–10 (MGDKKDDKSS) has biased composition (basic and acidic residues). The disordered stretch occupies residues 1–24 (MGDKKDDKSSPKKSKAKERRDLDD). Residues 1–77 (MGDKKDDKSS…NALTPPPTTP (77 aa)) lie on the Cytoplasmic side of the membrane. 2 positions are modified to phosphoserine: Ser37 and Ser56. Residues 72–74 (PPP) form an interaction with phosphoinositide-3 kinase region. The helical transmembrane segment at 78–98 (EWVKFCRQLFGGFSILLWIGA) threads the bilayer. The Extracellular segment spans residues 99 to 121 (ILCFLAYGIQAGTEDDPSGDNLY). A helical membrane pass occupies residues 122 to 142 (LGIVLAAVVIITGCFSYYQEA). Topologically, residues 143–278 (KSSKIMESFK…VGKTPIAIEI (136 aa)) are cytoplasmic. Ser218 and Ser265 each carry phosphoserine. The chain crosses the membrane as a helical span at residues 279-298 (EHFIQLITGVAVFLGVSFFI). Residues 299–310 (LSLILGYTWLEA) are Extracellular-facing. A helical membrane pass occupies residues 311 to 328 (VIFLIGIIVANVPEGLLA). Residues 329–762 (TVTVCLTLTA…EEGRLIFDNL (434 aa)) are Cytoplasmic-facing. Asp366 acts as the 4-aspartylphosphate intermediate in catalysis. Ser442 is modified (phosphoserine). The residue at position 548 (Tyr548) is a Phosphotyrosine. Asp707 and Asp711 together coordinate Mg(2+). A helical transmembrane segment spans residues 763-782 (KKSIAYTLTSNIPEITPFLL). Topologically, residues 783-792 (FIMANIPLPL) are extracellular. A helical membrane pass occupies residues 793–813 (GTITILCIDLGTDMVPAISLA). Topologically, residues 814-833 (YEAAESDIMKRQPRNPRTDK) are cytoplasmic. Residues 834–856 (LVNERLISMAYGQIGMIQALGGF) form a helical membrane-spanning segment. Topologically, residues 857–908 (FSYFVILAENGFLPGNLVGIRLNWDDRTVNDLEDSYGQQWTYEQRKVVEFTC) are extracellular. A helical transmembrane segment spans residues 909 to 928 (HTAFFVSIVVVQWADLIICK). Over 929 to 941 (TRRNSVFQQGMKN) the chain is Cytoplasmic. Ser933 carries the post-translational modification Phosphoserine; by PKA. The chain crosses the membrane as a helical span at residues 942 to 960 (KILIFGLFEETALAAFLSY). At 961–975 (CPGMDVALRMYPLKP) the chain is on the extracellular side. Residues 976 to 996 (SWWFCAFPYSFLIFVYDEIRK) form a helical membrane-spanning segment. At 997–1013 (LILRRNPGGWVEKETYY) the chain is on the cytoplasmic side.

The protein belongs to the cation transport ATPase (P-type) (TC 3.A.3) family. Type IIC subfamily. As to quaternary structure, the sodium/potassium-transporting ATPase is composed of a catalytic alpha subunit, an auxiliary non-catalytic beta subunit and an additional regulatory subunit. Interacts with regulatory subunit FXYD1.

It is found in the cell membrane. It catalyses the reaction K(+)(out) + Na(+)(in) + ATP + H2O = K(+)(in) + Na(+)(out) + ADP + phosphate + H(+). This is the catalytic component of the active enzyme, which catalyzes the hydrolysis of ATP coupled with the exchange of sodium and potassium ions across the plasma membrane. This action creates the electrochemical gradient of sodium and potassium ions, providing the energy for active transport of various nutrients. This chain is Sodium/potassium-transporting ATPase subunit alpha-3 (Atp1a3), found in Mus musculus (Mouse).